Here is a 364-residue protein sequence, read N- to C-terminus: Fructose-1,6-bisphosphatase class 1 2 (364 aa).

Positions 99, 121, 123, and 124 each coordinate Mg(2+). Substrate is bound by residues 124 to 127 and N220; that span reads DGSS. Position 292 (E292) interacts with Mg(2+).

This sequence belongs to the FBPase class 1 family. As to quaternary structure, homotetramer. Requires Mg(2+) as cofactor.

It is found in the cytoplasm. The enzyme catalyses beta-D-fructose 1,6-bisphosphate + H2O = beta-D-fructose 6-phosphate + phosphate. It functions in the pathway carbohydrate biosynthesis; gluconeogenesis. The chain is Fructose-1,6-bisphosphatase class 1 2 from Polaromonas naphthalenivorans (strain CJ2).